Consider the following 237-residue polypeptide: Ribosomal RNA small subunit methyltransferase G (237 aa).

Residues Gly-78, Phe-83, 129–130 (AE), and Arg-148 each bind S-adenosyl-L-methionine.

It belongs to the methyltransferase superfamily. RNA methyltransferase RsmG family.

The protein resides in the cytoplasm. Functionally, specifically methylates the N7 position of a guanine in 16S rRNA. In Streptococcus pyogenes serotype M1, this protein is Ribosomal RNA small subunit methyltransferase G.